The chain runs to 64 residues: MMIPVRCFTCGNVVGEHWEEFKERAREGDEDPGKVLDELGVDRHCCRRMMVSHRDLVDVVSPYQ.

4 residues coordinate Zn(2+): cysteine 7, cysteine 10, cysteine 45, and cysteine 46.

Belongs to the archaeal Rpo10/eukaryotic RPB10 RNA polymerase subunit family. As to quaternary structure, part of the RNA polymerase complex. It depends on Zn(2+) as a cofactor.

It localises to the cytoplasm. The enzyme catalyses RNA(n) + a ribonucleoside 5'-triphosphate = RNA(n+1) + diphosphate. Functionally, DNA-dependent RNA polymerase (RNAP) catalyzes the transcription of DNA into RNA using the four ribonucleoside triphosphates as substrates. This is DNA-directed RNA polymerase subunit Rpo10 from Halorubrum lacusprofundi (strain ATCC 49239 / DSM 5036 / JCM 8891 / ACAM 34).